A 369-amino-acid polypeptide reads, in one-letter code: Putative F-box/kelch-repeat protein At4g39760 (369 aa).

The 47-residue stretch at 14-60 (SLSFSSLPHEIVVSCLARVSGSYYPKLCLVSKQFRSIILSNEIYKAR) folds into the F-box domain. Kelch repeat units lie at residues 131–177 (ETYI…GQYP), 178–224 (NIYV…KMKM), and 228–274 (NVYV…KNCW).

The polypeptide is Putative F-box/kelch-repeat protein At4g39760 (Arabidopsis thaliana (Mouse-ear cress)).